The sequence spans 138 residues: Putative nickel-responsive regulator (138 aa).

Positions 78, 89, 91, and 97 each coordinate Ni(2+).

Belongs to the transcriptional regulatory CopG/NikR family. The cofactor is Ni(2+).

Transcriptional regulator. The protein is Putative nickel-responsive regulator of Desulfovibrio desulfuricans (strain ATCC 27774 / DSM 6949 / MB).